A 370-amino-acid chain; its full sequence is Cysteine-type anaerobic sulfatase-maturating enzyme (370 aa).

The Radical SAM core domain occupies 1–227 (MPPLSLLIKP…LKNLFDLWYE (227 aa)). Positions 15 and 19 each coordinate [4Fe-4S] cluster. Residue Tyr21 participates in S-adenosyl-L-methionine binding. Cys22 contacts [4Fe-4S] cluster. The S-adenosyl-L-methionine site is built by Gly66, Ser122, Arg134, and Leu195. Cys255, Cys261, and Cys276 together coordinate [4Fe-4S] cluster. The active-site Proton acceptor is Asp277. Residues Cys317, Cys320, Cys326, Cys330, and Cys348 each coordinate [4Fe-4S] cluster.

It belongs to the radical SAM superfamily. Anaerobic sulfatase-maturating enzyme family. [4Fe-4S] cluster serves as cofactor.

It catalyses the reaction L-cysteinyl-[sulfatase] + S-adenosyl-L-methionine + H2O = 3-oxo-L-alanyl-[sulfatase] + hydrogen sulfide + 5'-deoxyadenosine + L-methionine + 2 H(+). The protein operates within protein modification; sulfatase oxidation. Functionally, involved in 'Cys-type' sulfatase maturation under anaerobic conditions. Catalyzes the post-translational modification of cysteine into 3-oxoalanine (also known as C(alpha)-formylglycine (FGly)), by a free radical chemical mechanism initiated via the reductive cleavage of S-adenosyl-L-methionine (SAM). This is Cysteine-type anaerobic sulfatase-maturating enzyme from Clostridium perfringens (strain 13 / Type A).